The primary structure comprises 867 residues: Alanine--tRNA ligase (867 aa).

Zn(2+) contacts are provided by His-555, His-559, Cys-657, and His-661.

Belongs to the class-II aminoacyl-tRNA synthetase family. It depends on Zn(2+) as a cofactor.

The protein resides in the cytoplasm. It catalyses the reaction tRNA(Ala) + L-alanine + ATP = L-alanyl-tRNA(Ala) + AMP + diphosphate. Its function is as follows. Catalyzes the attachment of alanine to tRNA(Ala) in a two-step reaction: alanine is first activated by ATP to form Ala-AMP and then transferred to the acceptor end of tRNA(Ala). Also edits incorrectly charged Ser-tRNA(Ala) and Gly-tRNA(Ala) via its editing domain. This Psychromonas ingrahamii (strain DSM 17664 / CCUG 51855 / 37) protein is Alanine--tRNA ligase.